We begin with the raw amino-acid sequence, 29 residues long: Histone H2B (29 aa).

A disordered region spans residues 1–29 (MPEPAKSAPKKGSTRTAAKGGKKRRKSRK). Lysine 6 and lysine 11 each carry N6-acetyllysine. The residue at position 13 (serine 13) is a Phosphoserine. The span at 20–29 (GGKKRRKSRK) shows a compositional bias: basic residues.

It belongs to the histone H2B family. In terms of assembly, the nucleosome is a histone octamer containing two molecules each of H2A, H2B, H3 and H4 assembled in one H3-H4 heterotetramer and two H2A-H2B heterodimers. The octamer wraps approximately 147 bp of DNA. Monoubiquitination at the C-terminal Lys gives a specific tag for epigenetic transcriptional activation and is also prerequisite for histone H3 'Lys-4' and 'Lys-79' methylation. Post-translationally, phosphorylated during apoptosis; which facilitates apoptotic chromatin condensation.

Its subcellular location is the nucleus. It localises to the chromosome. Core component of nucleosome. Nucleosomes wrap and compact DNA into chromatin, limiting DNA accessibility to the cellular machineries which require DNA as a template. Histones thereby play a central role in transcription regulation, DNA repair, DNA replication and chromosomal stability. DNA accessibility is regulated via a complex set of post-translational modifications of histones, also called histone code, and nucleosome remodeling. The sequence is that of Histone H2B from Cyprinus carpio (Common carp).